The primary structure comprises 1209 residues: Inner capsid protein VP2 (1209 aa).

2 stretches are compositionally biased toward basic and acidic residues: residues 1-17 and 26-53; these read MSAR…KNDE and AADR…KKDS. The segment at 1 to 53 is disordered; it reads MSARTKEKTKDKTKNDEQTVSTEASAADRNDREKSSSSEPEDNAKETLTKKDS.

Belongs to the turreted BTV-fold inner capsid family. Homodecamer; each decamer is made up of two conformers of VP2, called VP2A and VP2B. 12 homodecamers assemble to form an icosahedral capsid.

Its subcellular location is the virion. In terms of biological role, inner capsid protein that self-assembles to form an icosahedral capsid with a T=2 symmetry, which consists of 120 copies of VP2, with channels at each of its five-fold vertices. This capsid constitutes the innermost concentric layer of the viral mature particle. The sequence is that of Inner capsid protein VP2 from Callospermophilus lateralis (Golden-mantled ground squirrel).